Here is a 346-residue protein sequence, read N- to C-terminus: Phosphoribosylformylglycinamidine cyclo-ligase (346 aa).

This sequence belongs to the AIR synthase family.

Its subcellular location is the cytoplasm. It catalyses the reaction 2-formamido-N(1)-(5-O-phospho-beta-D-ribosyl)acetamidine + ATP = 5-amino-1-(5-phospho-beta-D-ribosyl)imidazole + ADP + phosphate + H(+). The protein operates within purine metabolism; IMP biosynthesis via de novo pathway; 5-amino-1-(5-phospho-D-ribosyl)imidazole from N(2)-formyl-N(1)-(5-phospho-D-ribosyl)glycinamide: step 2/2. The chain is Phosphoribosylformylglycinamidine cyclo-ligase from Bacillus mycoides (strain KBAB4) (Bacillus weihenstephanensis).